Consider the following 98-residue polypeptide: Small ribosomal subunit protein uS19 (98 aa).

A disordered region spans residues T77–K98.

The protein belongs to the universal ribosomal protein uS19 family.

Its function is as follows. Protein S19 forms a complex with S13 that binds strongly to the 16S ribosomal RNA. This is Small ribosomal subunit protein uS19 from Chlorobium phaeobacteroides (strain DSM 266 / SMG 266 / 2430).